The chain runs to 278 residues: Potassium/proton antiporter CemA (278 aa).

4 helical membrane passes run L61–G81, A155–L175, I203–I223, and F238–I258.

Belongs to the CemA family.

It localises to the plastid. It is found in the chloroplast inner membrane. The catalysed reaction is K(+)(in) + H(+)(out) = K(+)(out) + H(+)(in). Functionally, contributes to K(+)/H(+) antiport activity by supporting proton efflux to control proton extrusion and homeostasis in chloroplasts in a light-dependent manner to modulate photosynthesis. Prevents excessive induction of non-photochemical quenching (NPQ) under continuous-light conditions. Indirectly promotes efficient inorganic carbon uptake into chloroplasts. The protein is Potassium/proton antiporter CemA of Cyanidium caldarium (Red alga).